The primary structure comprises 145 residues: Large ribosomal subunit protein uL16 (145 aa).

This sequence belongs to the universal ribosomal protein uL16 family. In terms of assembly, part of the 50S ribosomal subunit.

Binds 23S rRNA and is also seen to make contacts with the A and possibly P site tRNAs. The polypeptide is Large ribosomal subunit protein uL16 (Lachnospira eligens (strain ATCC 27750 / DSM 3376 / VPI C15-48 / C15-B4) (Eubacterium eligens)).